Here is a 530-residue protein sequence, read N- to C-terminus: 4-alpha-glucanotransferase (530 aa).

The protein belongs to the disproportionating enzyme family.

Its subcellular location is the cytoplasm. The catalysed reaction is Transfers a segment of a (1-&gt;4)-alpha-D-glucan to a new position in an acceptor, which may be glucose or a (1-&gt;4)-alpha-D-glucan.. This chain is 4-alpha-glucanotransferase (malQ), found in Chlamydia caviae (strain ATCC VR-813 / DSM 19441 / 03DC25 / GPIC) (Chlamydophila caviae).